We begin with the raw amino-acid sequence, 748 residues long: 5-methyltetrahydropteroyltriglutamate--homocysteine methyltransferase (748 aa).

Residues 18-21 (REWK) and lysine 112 each bind 5-methyltetrahydropteroyltri-L-glutamate. L-homocysteine contacts are provided by residues 420–422 (IGS) and glutamate 473. L-methionine contacts are provided by residues 420–422 (IGS) and glutamate 473. Tryptophan 550 contacts 5-methyltetrahydropteroyltri-L-glutamate. Aspartate 588 provides a ligand contact to L-homocysteine. Aspartate 588 contacts L-methionine. 5-methyltetrahydropteroyltri-L-glutamate is bound at residue glutamate 594. 3 residues coordinate Zn(2+): histidine 630, cysteine 632, and glutamate 654. The active-site Proton donor is histidine 683. Cysteine 715 contributes to the Zn(2+) binding site.

This sequence belongs to the vitamin-B12 independent methionine synthase family. Zn(2+) serves as cofactor.

The enzyme catalyses 5-methyltetrahydropteroyltri-L-glutamate + L-homocysteine = tetrahydropteroyltri-L-glutamate + L-methionine. The protein operates within amino-acid biosynthesis; L-methionine biosynthesis via de novo pathway; L-methionine from L-homocysteine (MetE route): step 1/1. Catalyzes the transfer of a methyl group from 5-methyltetrahydrofolate to homocysteine resulting in methionine formation. This chain is 5-methyltetrahydropteroyltriglutamate--homocysteine methyltransferase, found in Staphylococcus epidermidis (strain ATCC 35984 / DSM 28319 / BCRC 17069 / CCUG 31568 / BM 3577 / RP62A).